The following is a 430-amino-acid chain: Agropine synthesis reductase (430 aa).

203–227 (LVSGSNRGVGKAIAEDLIAHGYRLS) provides a ligand contact to NAD(+). Ser-333 is a substrate binding site. Residue Tyr-346 is the Proton acceptor of the active site.

Belongs to the short-chain dehydrogenases/reductases (SDR) family.

Its pathway is opine metabolism; mannopine biosynthesis. Functionally, reduces deoxy-fructosyl-glutamine to mannopine. This Rhizobium rhizogenes (Agrobacterium rhizogenes) protein is Agropine synthesis reductase (mas1).